Consider the following 288-residue polypeptide: Alpha/beta hydrolase domain-containing protein 17B (288 aa).

Residues S170, D235, and H264 each act as charge relay system in the active site. A Phosphoserine modification is found at S282.

Belongs to the AB hydrolase superfamily. ABHD17 family. Palmitoylated on cysteine residues located in a cysteine cluster at the N-terminus which promotes membrane localization. Palmitoylation is required for post-synaptic localization and for depalmitoylating activity towards DLG4/PSD95. Expressed in brain.

The protein resides in the cell membrane. The protein localises to the recycling endosome membrane. It is found in the cell projection. Its subcellular location is the dendritic spine. It localises to the postsynaptic density membrane. It catalyses the reaction S-hexadecanoyl-L-cysteinyl-[protein] + H2O = L-cysteinyl-[protein] + hexadecanoate + H(+). Functionally, hydrolyzes fatty acids from S-acylated cysteine residues in proteins. Has depalmitoylating activity towards DLG4/PSD95. Has depalmitoylating activity towards GAP43. Has depalmitoylating activity towards MAP6. Has depalmitoylating activity towards NRAS. The chain is Alpha/beta hydrolase domain-containing protein 17B from Mus musculus (Mouse).